We begin with the raw amino-acid sequence, 218 residues long: 3-dehydroquinate dehydratase (218 aa).

Residues 29-31 (EFR) and R56 each bind 3-dehydroquinate. H116 functions as the Proton donor/acceptor in the catalytic mechanism. Residue K142 is the Schiff-base intermediate with substrate of the active site. Residues R180, S200, and Q204 each contribute to the 3-dehydroquinate site.

Belongs to the type-I 3-dehydroquinase family. As to quaternary structure, homodimer.

The enzyme catalyses 3-dehydroquinate = 3-dehydroshikimate + H2O. It functions in the pathway metabolic intermediate biosynthesis; chorismate biosynthesis; chorismate from D-erythrose 4-phosphate and phosphoenolpyruvate: step 3/7. Functionally, involved in the third step of the chorismate pathway, which leads to the biosynthesis of aromatic amino acids. Catalyzes the cis-dehydration of 3-dehydroquinate (DHQ) and introduces the first double bond of the aromatic ring to yield 3-dehydroshikimate. The sequence is that of 3-dehydroquinate dehydratase from Methanococcus maripaludis (strain C7 / ATCC BAA-1331).